Here is a 671-residue protein sequence, read N- to C-terminus: UvrABC system protein C (671 aa).

A disordered region spans residues 1–20 (MPHLPDSMSPEAPAGPAPAT). Low complexity predominate over residues 10-20 (PEAPAGPAPAT). The region spanning 37-115 (PLPGVYRYFD…IKTLNPKYNI (79 aa)) is the GIY-YIG domain. The UVR domain occupies 232-267 (RQVMEALEARMMAHAEKLEFEQAAELRNQVAALSNV).

This sequence belongs to the UvrC family. Interacts with UvrB in an incision complex.

The protein resides in the cytoplasm. The UvrABC repair system catalyzes the recognition and processing of DNA lesions. UvrC both incises the 5' and 3' sides of the lesion. The N-terminal half is responsible for the 3' incision and the C-terminal half is responsible for the 5' incision. The polypeptide is UvrABC system protein C (Albidiferax ferrireducens (strain ATCC BAA-621 / DSM 15236 / T118) (Rhodoferax ferrireducens)).